The following is a 364-amino-acid chain: Urease accessory protein UreD (364 aa).

Disordered stretches follow at residues 1 to 37 (MDQD…SSPA) and 201 to 250 (PPEV…AGER). 3 stretches are compositionally biased toward low complexity: residues 21–37 (AGSA…SSPA), 209–218 (APDRGAPAAE), and 236–248 (AASS…APAG).

The protein belongs to the UreD family. In terms of assembly, ureD, UreF and UreG form a complex that acts as a GTP-hydrolysis-dependent molecular chaperone, activating the urease apoprotein by helping to assemble the nickel containing metallocenter of UreC. The UreE protein probably delivers the nickel.

The protein resides in the cytoplasm. In terms of biological role, required for maturation of urease via the functional incorporation of the urease nickel metallocenter. The chain is Urease accessory protein UreD from Kocuria rhizophila (strain ATCC 9341 / DSM 348 / NBRC 103217 / DC2201).